The sequence spans 194 residues: Large ribosomal subunit protein eL15 (194 aa).

Residues 168–194 (RSRGLLNKGKGAEKVRPSIRAHQGKGK) are disordered. Positions 184–194 (PSIRAHQGKGK) are enriched in basic residues.

Belongs to the eukaryotic ribosomal protein eL15 family. As to quaternary structure, part of the 50S ribosomal subunit.

The chain is Large ribosomal subunit protein eL15 from Thermococcus kodakarensis (strain ATCC BAA-918 / JCM 12380 / KOD1) (Pyrococcus kodakaraensis (strain KOD1)).